The following is an 80-amino-acid chain: RNA-binding protein Hfq (80 aa).

The Sm domain maps to 10-70; sequence DAFLNQVRKE…ISTISPLRPV (61 aa).

Belongs to the Hfq family. Homohexamer.

Its function is as follows. RNA chaperone that binds small regulatory RNA (sRNAs) and mRNAs to facilitate mRNA translational regulation in response to envelope stress, environmental stress and changes in metabolite concentrations. Also binds with high specificity to tRNAs. This chain is RNA-binding protein Hfq, found in Desulforamulus reducens (strain ATCC BAA-1160 / DSM 100696 / MI-1) (Desulfotomaculum reducens).